A 445-amino-acid polypeptide reads, in one-letter code: Phosphoglucosamine mutase (445 aa).

The active-site Phosphoserine intermediate is serine 102. The Mg(2+) site is built by serine 102, aspartate 241, aspartate 243, and aspartate 245. Serine 102 carries the phosphoserine modification.

This sequence belongs to the phosphohexose mutase family. Mg(2+) serves as cofactor. Activated by phosphorylation.

It carries out the reaction alpha-D-glucosamine 1-phosphate = D-glucosamine 6-phosphate. In terms of biological role, catalyzes the conversion of glucosamine-6-phosphate to glucosamine-1-phosphate. The polypeptide is Phosphoglucosamine mutase (Escherichia coli (strain 55989 / EAEC)).